The primary structure comprises 228 residues: uncharacterized protein (228 aa).

This is an uncharacterized protein from Acidianus ambivalens (Desulfurolobus ambivalens).